Consider the following 340-residue polypeptide: GTP 3',8-cyclase (340 aa).

In terms of domain architecture, Radical SAM core spans 20 to 246; that stretch reads RFERQYVYLR…PKALSDGPAK (227 aa). R29 contributes to the GTP binding site. [4Fe-4S] cluster-binding residues include C36 and C40. Y42 is an S-adenosyl-L-methionine binding site. C43 lines the [4Fe-4S] cluster pocket. R79 serves as a coordination point for GTP. Position 83 (G83) interacts with S-adenosyl-L-methionine. T110 provides a ligand contact to GTP. S134 provides a ligand contact to S-adenosyl-L-methionine. Residue K171 participates in GTP binding. M205 lines the S-adenosyl-L-methionine pocket. [4Fe-4S] cluster is bound by residues C268 and C271. 273 to 275 contacts GTP; that stretch reads RLR. C285 is a [4Fe-4S] cluster binding site.

The protein belongs to the radical SAM superfamily. MoaA family. Monomer and homodimer. Requires [4Fe-4S] cluster as cofactor.

It carries out the reaction GTP + AH2 + S-adenosyl-L-methionine = (8S)-3',8-cyclo-7,8-dihydroguanosine 5'-triphosphate + 5'-deoxyadenosine + L-methionine + A + H(+). Its pathway is cofactor biosynthesis; molybdopterin biosynthesis. Functionally, catalyzes the cyclization of GTP to (8S)-3',8-cyclo-7,8-dihydroguanosine 5'-triphosphate. The protein is GTP 3',8-cyclase of Actinobacillus pleuropneumoniae serotype 7 (strain AP76).